The chain runs to 429 residues: Cell wall protein ECM33 (429 aa).

The signal sequence occupies residues 1 to 19; it reads MQFKNALTATAILSASALA. N-linked (GlcNAc...) asparagine glycosylation is found at N21, N56, N82, N196, N209, N227, N234, N241, N267, N279, N304, and N328. Position 339 is a phosphoserine (S339). Low complexity predominate over residues 361-401; it reads LSSTSTESSKSSATSSASSSGDASNAQANVSASASSSSSSS. Residues 361–410 are disordered; the sequence is LSSTSTESSKSSATSSASSSGDASNAQANVSASASSSSSSSKKSKGAAPE. A glycan (N-linked (GlcNAc...) asparagine) is linked at N389. G406 carries GPI-anchor amidated glycine lipidation. The propeptide at 407–429 is removed in mature form; it reads AAPELVPATSFMGVVAAVAVALL.

It belongs to the SPS2 family. Post-translationally, the GPI-anchor is attached to the protein in the endoplasmic reticulum and serves to target the protein to the cell surface. There, the glucosamine-inositol phospholipid moiety is cleaved off and the GPI-modified mannoprotein is covalently attached via its lipidless GPI glycan remnant to the 1,6-beta-glucan of the outer cell wall layer.

It localises to the cell membrane. The protein localises to the secreted. The protein resides in the cell wall. Required for proper cell wall integrity and for the correct assembly of the mannoprotein outer layer of the cell wall. Important for apical bud growth. The polypeptide is Cell wall protein ECM33 (ECM33) (Saccharomyces cerevisiae (strain AWRI1631) (Baker's yeast)).